The chain runs to 231 residues: Elongation factor 1-delta 1 (231 aa).

At Ala-2 the chain carries N-acetylalanine. The GST C-terminal domain maps to 10–73; sequence DAGLKKLDEH…LRISGVSAEG (64 aa). 2 disordered regions span residues 85–108 and 116–135; these read TEEA…EDDD and ETEE…KAST. Over residues 119–129 the composition is skewed to basic and acidic residues; it reads EEKKAAEERAA.

The protein belongs to the EF-1-beta/EF-1-delta family. As to quaternary structure, EF-1 is composed of 4 subunits: alpha, beta (1B-alpha=beta'), delta (1B-beta), and gamma (1B-gamma).

EF-1-beta and EF-1-delta stimulate the exchange of GDP bound to EF-1-alpha to GTP. The chain is Elongation factor 1-delta 1 from Arabidopsis thaliana (Mouse-ear cress).